The chain runs to 1782 residues: MGAGSSTEQRSPEQPPEGSSTPAEPEPSGGGPSAEAAPDTTADPAIAASDPATKLLQKNGQLSTINGVAEQDELSLQEGDLNGQKGALNGQGALNSQEEEEVIVTEVGQRDSEDVSKRDSDKEMATKSAVVHDITDDGQEETPEIIEQIPSSESNLEELTQPTESQANDIGFKKVFKFVGFKFTVKKDKTEKPDTVQLLTVKKDEGEGAAGAGDHKDPSLGAGEAASKESEPKQSTEKPEETLKREQSHAEISPPAESGQAVEECKEEGEEKQEKEPSKSAESPTSPVTSETGSTFKKFFTQGWAGWRKKTSFRKPKEDEVEASEKKKEQEPEKVDTEEDGKAEVASEKLTASEQAHPQEPAESAHEPRLSAEYEKVELPSEEQVSGSQGPSEEKPAPLATEVFDEKIEVHQEEVVAEVHVSTVEERTEEQKTEVEETAGSVPAEELVEMDAEPQEAEPAKELVKLKETCVSGEDPTQGADLSPDEKVLSKPPEGVVSEVEMLSSQERMKVQGSPLKKLFTSTGLKKLSGKKQKGKRGGGDEESGEHTQVPADSPDSQEEQKGESSASSPEEPEEITCLEKGLAEVQQDGEAEEGATSDGEKKREGVTPWASFKKMVTPKKRVRRPSESDKEDELDKVKSATLSSTESTASEMQEEMKGSVEEPKPEEPKRKVDTSVSWEALICVGSSKKRARRGSSSDEEGGPKAMGGDHQKADEAGKDKETGTDGILAGSQEHDPGQGSSSPEQAGSPTEGEGVSTWESFKRLVTPRKKSKSKLEEKSEDSIAGSGVEHSTPDTEPGKEESWVSIKKFIPGRRKKRPDGKQEQAPVEDAGPTGANEDDSDVPAVVPLSEYDAVEREKMEAQQAQKSAEQPEQKAATEVSKELSESQVHMMAAAVADGTRAATIIEERSPSWISASVTEPLEQVEAEAALLTEEVLEREVIAEEEPPTVTEPLPENREARGDTVVSEAELTPEAVTAAETAGPLGAEEGTEASAAEETTEMVSAVSQLTDSPDTTEEATPVQEVEGGVPDIEEQERRTQEVLQAVAEKVKEESQLPGTGGPEDVLQPVQRAEAERPEEQAEASGLKKETDVVLKVDAQEAKTEPFTQGKVVGQTTPESFEKAPQVTESIESSELVTTCQAETLAGVKSQEMVMEQAIPPDSVETPTDSETDGSTPVADFDAPGTTQKDEIVEIHEENEVASGTQSGGTEAEAVPAQKERPPAPSSFVFQEETKEQSKMEDTLEHTDKEVSVETVSILSKTEGTQEADQYADEKTKDVPFFEGLEGSIDTGITVSREKVTEVALKGEGTEEAECKKDDALELQSHAKSPPSPVEREMVVQVEREKTEAEPTHVNEEKLEHETAVTVSEEVSKQLLQTVNVPIIDGAKEVSSLEGSPPPCLGQEEAVCTKIQVQSSEASFTLTAAAEEEKVLGETANILETGETLEPAGAHLVLEEKSSEKNEDFAAHPGEDAVPTGPDCQAKSTPVIVSATTKKGLSSDLEGEKTTSLKWKSDEVDEQVACQEVKVSVAIEDLEPENGILELETKSSKLVQNIIQTAVDQFVRTEETATEMLTSELQTQAHVIKADSQDAGQETEKEGEEPQASAQDETPITSAKEESESTAVGQAHSDISKDMSEASEKTMTVEVEGSTVNDQQLEEVVLPSEEEGGGAGTKSVPEDDGHALLAERIEKSLVEPKEDEKGDDVDDPENQNSALADTDASGGLTKESPDTNGPKQKEKEDAQEVELQEGKVHSESDKAITPQAQEELQKQERESAKSELTES.

Disordered regions lie at residues 1 to 53, 71 to 169, 189 to 400, 421 to 886, 938 to 1089, 1105 to 1134, 1157 to 1274, and 1305 to 1355; these read MGAG…DPAT, QDEL…QAND, KTEK…APLA, VSTV…ELSE, EREV…LKKE, PFTQ…ESSE, AIPP…ADEK, and KGEG…HVNE. Residue glycine 2 is the site of N-myristoyl glycine attachment. 5 positions are modified to phosphoserine: serine 11, serine 19, serine 28, serine 75, and serine 96. Low complexity predominate over residues 16-53; that stretch reads PEGSSTPAEPEPSGGGPSAEAAPDTTADPAIAASDPAT. Over residues 108-125 the composition is skewed to basic and acidic residues; it reads GQRDSEDVSKRDSDKEMA. A compositionally biased stretch (low complexity) spans 145 to 154; the sequence is IIEQIPSSES. Serine 154 bears the Phosphoserine mark. Residues 157–168 are compositionally biased toward polar residues; that stretch reads EELTQPTESQAN. A phosphoserine mark is found at serine 219, serine 248, serine 258, serine 280, serine 283, serine 286, serine 347, and serine 371. Basic and acidic residues predominate over residues 226-249; that stretch reads ASKESEPKQSTEKPEETLKREQSH. Residues 266–557 are involved in PKC-binding; sequence KEEGEEKQEK…TQVPADSPDS (292 aa). Basic and acidic residues-rich tracts occupy residues 315-347 and 363-379; these read KPKE…EVAS and ESAH…KVEL. Phosphotyrosine is present on tyrosine 374. A phosphoserine mark is found at serine 381 and serine 392. Residues 423-435 are compositionally biased toward basic and acidic residues; that stretch reads TVEERTEEQKTEV. Residues 446–456 show a composition bias toward acidic residues; sequence ELVEMDAEPQE. Over residues 458-468 the composition is skewed to basic and acidic residues; the sequence is EPAKELVKLKE. Serine 483 and serine 505 each carry phosphoserine. The span at 528 to 537 shows a compositional bias: basic residues; sequence LSGKKQKGKR. 6 positions are modified to phosphoserine: serine 554, serine 557, serine 598, serine 612, serine 627, and serine 629. Positions 607–627 match the AKAP CaM-binding 1 motif; sequence VTPWASFKKMVTPKKRVRRPS. Basic and acidic residues predominate over residues 625–639; the sequence is RPSESDKEDELDKVK. The span at 640-652 shows a compositional bias: low complexity; the sequence is SATLSSTESTASE. Phosphothreonine is present on threonine 642. 4 positions are modified to phosphoserine: serine 644, serine 645, serine 648, and serine 651. Residues 655-674 are compositionally biased toward basic and acidic residues; that stretch reads EEMKGSVEEPKPEEPKRKVD. 3 positions are modified to phosphoserine: serine 696, serine 697, and serine 698. Over residues 708–724 the composition is skewed to basic and acidic residues; sequence GGDHQKADEAGKDKETG. Residues 739–749 show a composition bias toward polar residues; it reads QGSSSPEQAGS. 3 positions are modified to phosphoserine: serine 749, serine 761, and serine 787. Residues 756 to 776 carry the AKAP CaM-binding 2 motif; that stretch reads VSTWESFKRLVTPRKKSKSKL. Residues 792 to 803 are compositionally biased toward basic and acidic residues; the sequence is STPDTEPGKEES. Residues 801–821 carry the AKAP CaM-binding 3 motif; the sequence is EESWVSIKKFIPGRRKKRPDG. A Phosphoserine modification is found at serine 806. Low complexity predominate over residues 986–997; that stretch reads GAEEGTEASAAE. A Glycyl lysine isopeptide (Lys-Gly) (interchain with G-Cter in SUMO1) cross-link involves residue lysine 1051. Residues 1072 to 1089 show a composition bias toward basic and acidic residues; that stretch reads AEAERPEEQAEASGLKKE. The segment covering 1164 to 1174 has biased composition (polar residues); that stretch reads ETPTDSETDGS. Composition is skewed to basic and acidic residues over residues 1187–1198 and 1231–1251; these read QKDEIVEIHEEN and EETK…KEVS. Residues 1253 to 1267 are compositionally biased toward polar residues; that stretch reads ETVSILSKTEGTQEA. Residues serine 1328 and serine 1331 each carry the phosphoserine modification. The span at 1333–1355 shows a compositional bias: basic and acidic residues; that stretch reads VEREMVVQVEREKTEAEPTHVNE. Phosphoserine is present on residues serine 1391 and serine 1395. An RII-binding region spans residues 1541-1554; it reads ELETKSSKLVQNII. Residues 1584 to 1782 form a disordered region; that stretch reads KADSQDAGQE…ESAKSELTES (199 aa). Serine 1587 is modified (phosphoserine). Positions 1603 to 1612 are enriched in polar residues; the sequence is ASAQDETPIT. Basic and acidic residues-rich tracts occupy residues 1629 to 1639 and 1675 to 1699; these read DISKDMSEASE and VPED…KEDE. A Phosphoserine modification is found at serine 1727. 2 stretches are compositionally biased toward basic and acidic residues: residues 1734-1757 and 1766-1782; these read KQKE…ESDK and ELQK…LTES.

Binds to dimeric RII-alpha regulatory subunit of PKC. Expressed in endothelial cells, cultured fibroblasts and osteosarcoma, but not in platelets, leukocytes, monocytic cell lines or peripherical blood cells.

The protein localises to the cytoplasm. It is found in the cell cortex. The protein resides in the cytoskeleton. Its subcellular location is the membrane. Its function is as follows. Anchoring protein that mediates the subcellular compartmentation of protein kinase A (PKA) and protein kinase C (PKC). The sequence is that of A-kinase anchor protein 12 (AKAP12) from Homo sapiens (Human).